The following is a 208-amino-acid chain: Outer-membrane lipoprotein carrier protein (208 aa).

The first 22 residues, 1-22 (MKKRLCAVLLASPLLFSAAVFA), serve as a signal peptide directing secretion.

The protein belongs to the LolA family. In terms of assembly, monomer.

It localises to the periplasm. Participates in the translocation of lipoproteins from the inner membrane to the outer membrane. Only forms a complex with a lipoprotein if the residue after the N-terminal Cys is not an aspartate (The Asp acts as a targeting signal to indicate that the lipoprotein should stay in the inner membrane). In Shewanella baltica (strain OS223), this protein is Outer-membrane lipoprotein carrier protein.